Reading from the N-terminus, the 437-residue chain is Ribosomal protein uS12 methylthiotransferase RimO (437 aa).

The region spanning 4 to 114 (PRVSFVSLGC…VMAAVHEAAP (111 aa)) is the MTTase N-terminal domain. Residues Cys-13, Cys-49, Cys-78, Cys-145, Cys-149, and Cys-152 each contribute to the [4Fe-4S] cluster site. The Radical SAM core domain occupies 131 to 369 (LTPRHYAYLK…MQRQQKISAT (239 aa)). The TRAM domain maps to 372-437 (AKKVGKRLPV…DAYDLYGSAV (66 aa)).

This sequence belongs to the methylthiotransferase family. RimO subfamily. It depends on [4Fe-4S] cluster as a cofactor.

It is found in the cytoplasm. It catalyses the reaction L-aspartate(89)-[ribosomal protein uS12]-hydrogen + (sulfur carrier)-SH + AH2 + 2 S-adenosyl-L-methionine = 3-methylsulfanyl-L-aspartate(89)-[ribosomal protein uS12]-hydrogen + (sulfur carrier)-H + 5'-deoxyadenosine + L-methionine + A + S-adenosyl-L-homocysteine + 2 H(+). In terms of biological role, catalyzes the methylthiolation of an aspartic acid residue of ribosomal protein uS12. The sequence is that of Ribosomal protein uS12 methylthiotransferase RimO from Mesorhizobium japonicum (strain LMG 29417 / CECT 9101 / MAFF 303099) (Mesorhizobium loti (strain MAFF 303099)).